The primary structure comprises 574 residues: Developmental and secondary metabolism regulator veA (574 aa).

4 disordered regions span residues Met1–Thr22, Glu39–Pro60, Arg255–Lys500, and Arg513–Arg540. The region spanning Gly25–Arg230 is the Velvet domain. The Nuclear localization signal signature appears at Glu39–Cys44. Pro residues-rich tracts occupy residues Arg314–Ala323 and Pro330–His341. 4 stretches are compositionally biased toward polar residues: residues Pro343–Ser353, His385–Glu394, Arg406–Pro415, and Val448–Thr458. Positions Gln457–Ala498 are PEST. Low complexity-rich tracts occupy residues Pro459–Ser474 and Ser482–Ser493. Residues Arg513 to Pro525 are compositionally biased toward basic and acidic residues.

Belongs to the velvet family. VeA subfamily. In terms of assembly, component of the heterotrimeric velvet complex composed of laeA, veA and velB; VeA acting as a bridging protein between laeA and velB.

The protein resides in the nucleus. Its subcellular location is the cytoplasm. Its function is as follows. Component of the velvet transcription factor complex that controls sexual/asexual developmental ratio in response to light, promoting sexual development in the darkness while stimulating asexual sporulation under illumination. The velvet complex hat acts as a global regulator for secondary metabolite gene expression. Controls the expression of the cyclopiazonic acid, aflatrem, and aflatoxin gene clusters. Controls the expression of the sclerotium-specific pigment asparasone A gene cluster. Controls the expression of the aflavarin gene cluster. also controls the production of hydrolases and other extracellular proteins during growth on natural starch-based substrates. Regulates genes involved in the High Osmolarity Glycerol (HOG) signaling pathway. Required for the conidial and sclerotial density-dependent production. In Aspergillus flavus (strain ATCC 200026 / FGSC A1120 / IAM 13836 / NRRL 3357 / JCM 12722 / SRRC 167), this protein is Developmental and secondary metabolism regulator veA.